The primary structure comprises 599 residues: Elongation factor 4 (599 aa).

The 183-residue stretch at 5-187 (NRIRNFSIVA…AIVTRLPAPK (183 aa)) folds into the tr-type G domain. GTP-binding positions include 17 to 22 (DHGKST) and 134 to 137 (NKVD).

This sequence belongs to the TRAFAC class translation factor GTPase superfamily. Classic translation factor GTPase family. LepA subfamily.

The protein localises to the cell inner membrane. The catalysed reaction is GTP + H2O = GDP + phosphate + H(+). Its function is as follows. Required for accurate and efficient protein synthesis under certain stress conditions. May act as a fidelity factor of the translation reaction, by catalyzing a one-codon backward translocation of tRNAs on improperly translocated ribosomes. Back-translocation proceeds from a post-translocation (POST) complex to a pre-translocation (PRE) complex, thus giving elongation factor G a second chance to translocate the tRNAs correctly. Binds to ribosomes in a GTP-dependent manner. The chain is Elongation factor 4 from Jannaschia sp. (strain CCS1).